A 298-amino-acid polypeptide reads, in one-letter code: ATP phosphoribosyltransferase (298 aa).

This sequence belongs to the ATP phosphoribosyltransferase family. Long subfamily. Mg(2+) serves as cofactor.

The protein resides in the cytoplasm. The catalysed reaction is 1-(5-phospho-beta-D-ribosyl)-ATP + diphosphate = 5-phospho-alpha-D-ribose 1-diphosphate + ATP. Its pathway is amino-acid biosynthesis; L-histidine biosynthesis; L-histidine from 5-phospho-alpha-D-ribose 1-diphosphate: step 1/9. Feedback inhibited by histidine. Functionally, catalyzes the condensation of ATP and 5-phosphoribose 1-diphosphate to form N'-(5'-phosphoribosyl)-ATP (PR-ATP). Has a crucial role in the pathway because the rate of histidine biosynthesis seems to be controlled primarily by regulation of HisG enzymatic activity. In Aliivibrio salmonicida (strain LFI1238) (Vibrio salmonicida (strain LFI1238)), this protein is ATP phosphoribosyltransferase.